The sequence spans 652 residues: Acetyl-coenzyme A synthetase (652 aa).

Residues 190 to 193 and Thr310 each bind CoA; that span reads RGGR. ATP is bound by residues 386–388, 410–415, Asp499, and Arg514; these read GEP and DTWWQT. Ser522 is a binding site for CoA. Arg525 contributes to the ATP binding site. Positions 536, 538, and 541 each coordinate Mg(2+). Arg583 contributes to the CoA binding site. Lys608 carries the post-translational modification N6-acetyllysine.

This sequence belongs to the ATP-dependent AMP-binding enzyme family. The cofactor is Mg(2+). Post-translationally, acetylated. Deacetylation by the SIR2-homolog deacetylase activates the enzyme.

The catalysed reaction is acetate + ATP + CoA = acetyl-CoA + AMP + diphosphate. Catalyzes the conversion of acetate into acetyl-CoA (AcCoA), an essential intermediate at the junction of anabolic and catabolic pathways. AcsA undergoes a two-step reaction. In the first half reaction, AcsA combines acetate with ATP to form acetyl-adenylate (AcAMP) intermediate. In the second half reaction, it can then transfer the acetyl group from AcAMP to the sulfhydryl group of CoA, forming the product AcCoA. This chain is Acetyl-coenzyme A synthetase, found in Methylorubrum extorquens (strain CM4 / NCIMB 13688) (Methylobacterium extorquens).